The primary structure comprises 145 residues: ATP synthase epsilon chain (145 aa).

The protein belongs to the ATPase epsilon chain family. In terms of assembly, F-type ATPases have 2 components, CF(1) - the catalytic core - and CF(0) - the membrane proton channel. CF(1) has five subunits: alpha(3), beta(3), gamma(1), delta(1), epsilon(1). CF(0) has three main subunits: a, b and c.

It is found in the cell membrane. Functionally, produces ATP from ADP in the presence of a proton gradient across the membrane. The protein is ATP synthase epsilon chain of Buchnera aphidicola subsp. Baizongia pistaciae (strain Bp).